An 84-amino-acid chain; its full sequence is Toxin Ts4 (84 aa).

The N-terminal stretch at 1 to 19 is a signal peptide; it reads MKRMILFISCLLLIDIVVG. Residues 21 to 82 form the LCN-type CS-alpha/beta domain; it reads REGYPADSKG…IWTSETNKCG (62 aa). Cystine bridges form between C31/C81, C35/C57, C43/C62, and C47/C64. Cysteine amide is present on C81. The propeptide occupies 82 to 84; the sequence is GKK.

It belongs to the long (4 C-C) scorpion toxin superfamily. Sodium channel inhibitor family. Alpha subfamily. Expressed by the venom gland.

Its subcellular location is the secreted. In terms of biological role, not toxic. Induces an immune response similar to that induced by whole venom. Induces a dose dependent release of the neurotransmitters glutamic acid and gamma aminobutyric acid from rat brain synaptosomes. Thus, polyclonal antibodies raised against this protein can neutralize the effects of the venom. This chain is Toxin Ts4, found in Tityus serrulatus (Brazilian scorpion).